We begin with the raw amino-acid sequence, 123 residues long: Small ribosomal subunit protein uS12 (123 aa).

3-methylthioaspartic acid is present on D89.

Belongs to the universal ribosomal protein uS12 family. As to quaternary structure, part of the 30S ribosomal subunit. Contacts proteins S8 and S17. May interact with IF1 in the 30S initiation complex.

In terms of biological role, with S4 and S5 plays an important role in translational accuracy. Interacts with and stabilizes bases of the 16S rRNA that are involved in tRNA selection in the A site and with the mRNA backbone. Located at the interface of the 30S and 50S subunits, it traverses the body of the 30S subunit contacting proteins on the other side and probably holding the rRNA structure together. The combined cluster of proteins S8, S12 and S17 appears to hold together the shoulder and platform of the 30S subunit. In Nitrobacter winogradskyi (strain ATCC 25391 / DSM 10237 / CIP 104748 / NCIMB 11846 / Nb-255), this protein is Small ribosomal subunit protein uS12.